The following is a 149-amino-acid chain: MLQPKRVKFRKVQRGRRDGAAHKGNTVAFGEFALQSLEAGWITARQIEATRRAITRYIRRGGQVWIRIFPDKPITKKPAETRQGGGKGAPEEWVAVVRRGRIMFEIGGVTPEAAKEAMRLASYKMPVKTRFVARDIPVVAGETEVEEAE.

This sequence belongs to the universal ribosomal protein uL16 family. In terms of assembly, part of the 50S ribosomal subunit.

Functionally, binds 23S rRNA and is also seen to make contacts with the A and possibly P site tRNAs. This chain is Large ribosomal subunit protein uL16, found in Dehalococcoides mccartyi (strain ATCC BAA-2100 / JCM 16839 / KCTC 5957 / BAV1).